The following is a 79-amino-acid chain: RNA-binding protein Hfq (79 aa).

The 61-residue stretch at 10 to 70 folds into the Sm domain; it reads DVFLNTVRKQ…ISTIMPGQPV (61 aa).

The protein belongs to the Hfq family. In terms of assembly, homohexamer.

Its function is as follows. RNA chaperone that binds small regulatory RNA (sRNAs) and mRNAs to facilitate mRNA translational regulation in response to envelope stress, environmental stress and changes in metabolite concentrations. Also binds with high specificity to tRNAs. In Bartonella henselae (strain ATCC 49882 / DSM 28221 / CCUG 30454 / Houston 1) (Rochalimaea henselae), this protein is RNA-binding protein Hfq.